A 125-amino-acid chain; its full sequence is MLVIILGVIGLLASSNLVSSSTSTRVGGHLPLTFDPPENELGYWYTYVESCRFCWDCEDGVCTSRVWGNNSTSIVENDYVKYCEVSRWGDQCRYDVEEHIYYTMNCSDPKPWNPYKIAKEGVEKG.

The N-terminal stretch at 1–20 is a signal peptide; sequence MLVIILGVIGLLASSNLVSS. Residues asparagine 69, asparagine 70, and asparagine 105 are each glycosylated (N-linked (GlcNAc...) asparagine; by host).

This sequence belongs to the asfivirus MGF 110 family.

In terms of biological role, plays a role in virus cell tropism, and may be required for efficient virus replication in macrophages. The sequence is that of Protein MGF 110-7L from Ornithodoros (relapsing fever ticks).